The sequence spans 112 residues: Iron-sulfur cluster assembly protein CyaY (112 aa).

This sequence belongs to the frataxin family.

Its function is as follows. Involved in iron-sulfur (Fe-S) cluster assembly. May act as a regulator of Fe-S biogenesis. The polypeptide is Iron-sulfur cluster assembly protein CyaY (Delftia acidovorans (strain DSM 14801 / SPH-1)).